A 268-amino-acid chain; its full sequence is MDTWKVGPVELKSRLILGSGKYKDFGVMREAIAAAKAEVVTVSIRRVELKAPGHVGLLEALEGVRLLPNTAGARTAEEAVRLARLGRLLTGERWVKLEVIPDPTYLLPDPLETLKAAERLIEEDFLVLPYMGPDLVLAKRLAALGTATVMPLAAPIGSGWGVRTRALLELFAREKASLPPVVVDAGLGLPSHAAEVMELGLDAVLVNTAIAEAQDPPAMAEAFRLAVEAGRKAYLAGPMRPREAASPSSPVEGVPFTPTGPRPGRGPQ.

The active-site Schiff-base intermediate with DXP is Lys96. 1-deoxy-D-xylulose 5-phosphate is bound by residues Gly157, 185–186 (AG), and 207–208 (NT). A disordered region spans residues 238 to 268 (PMRPREAASPSSPVEGVPFTPTGPRPGRGPQ). Pro residues predominate over residues 258–268 (PTGPRPGRGPQ).

The protein belongs to the ThiG family. Homotetramer. Forms heterodimers with either ThiH or ThiS.

It localises to the cytoplasm. It carries out the reaction [ThiS sulfur-carrier protein]-C-terminal-Gly-aminoethanethioate + 2-iminoacetate + 1-deoxy-D-xylulose 5-phosphate = [ThiS sulfur-carrier protein]-C-terminal Gly-Gly + 2-[(2R,5Z)-2-carboxy-4-methylthiazol-5(2H)-ylidene]ethyl phosphate + 2 H2O + H(+). It participates in cofactor biosynthesis; thiamine diphosphate biosynthesis. Catalyzes the rearrangement of 1-deoxy-D-xylulose 5-phosphate (DXP) to produce the thiazole phosphate moiety of thiamine. Sulfur is provided by the thiocarboxylate moiety of the carrier protein ThiS. In vitro, sulfur can be provided by H(2)S. This Thermus thermophilus (strain ATCC BAA-163 / DSM 7039 / HB27) protein is Thiazole synthase.